We begin with the raw amino-acid sequence, 22 residues long: C-type natriuretic peptide (22 aa).

Residues cysteine 6 and cysteine 22 are joined by a disulfide bond.

It belongs to the natriuretic peptide family.

The protein resides in the secreted. Hormone which plays a role in endochondral ossification through regulation of cartilaginous growth plate chondrocytes proliferation and differentiation. May also be vasoactive and natriuretic. Specifically binds and stimulates the cGMP production of the NPR2 receptor. Binds the clearance receptor NPR3. In Gallus gallus (Chicken), this protein is C-type natriuretic peptide (NPPC).